Reading from the N-terminus, the 192-residue chain is GTP cyclohydrolase-2 (192 aa).

50–54 lines the GTP pocket; that stretch reads RLHSE. Positions 55, 66, and 68 each coordinate Zn(2+). Residues 92–94 and threonine 114 contribute to the GTP site; that span reads EGR. Aspartate 126 serves as the catalytic Proton acceptor. Arginine 128 functions as the Nucleophile in the catalytic mechanism. GTP is bound by residues threonine 149 and lysine 154.

It belongs to the GTP cyclohydrolase II family. Requires Zn(2+) as cofactor.

It carries out the reaction GTP + 4 H2O = 2,5-diamino-6-hydroxy-4-(5-phosphoribosylamino)-pyrimidine + formate + 2 phosphate + 3 H(+). It participates in cofactor biosynthesis; riboflavin biosynthesis; 5-amino-6-(D-ribitylamino)uracil from GTP: step 1/4. Functionally, catalyzes the conversion of GTP to 2,5-diamino-6-ribosylamino-4(3H)-pyrimidinone 5'-phosphate (DARP), formate and pyrophosphate. The protein is GTP cyclohydrolase-2 of Helicobacter acinonychis (strain Sheeba).